The chain runs to 173 residues: T-cell receptor beta-2 chain C region (173 aa).

Residues 1 to 146 (EDLRNVTPPK…GVLSATILYE (146 aa)) are c region. Asparagine 67 and asparagine 116 each carry an N-linked (GlcNAc...) asparagine glycan. A helical transmembrane segment spans residues 147 to 168 (ILLGKATLYAVLVSGLVLMAMV). The Cytoplasmic segment spans residues 169-173 (KKKNS).

The protein localises to the membrane. This is T-cell receptor beta-2 chain C region from Mus musculus (Mouse).